A 333-amino-acid polypeptide reads, in one-letter code: L-lactate dehydrogenase B chain (333 aa).

Residues 29–57 and arginine 99 contribute to the NAD(+) site; that span reads GQVG…LEDK. Residues arginine 106, asparagine 138, and arginine 169 each coordinate substrate. NAD(+) is bound at residue asparagine 138. Histidine 193 functions as the Proton acceptor in the catalytic mechanism. Residue threonine 248 participates in substrate binding.

The protein belongs to the LDH/MDH superfamily. LDH family. As to quaternary structure, homotetramer.

The protein localises to the cytoplasm. The enzyme catalyses (S)-lactate + NAD(+) = pyruvate + NADH + H(+). The protein operates within fermentation; pyruvate fermentation to lactate; (S)-lactate from pyruvate: step 1/1. Functionally, interconverts simultaneously and stereospecifically pyruvate and lactate with concomitant interconversion of NADH and NAD(+). This Sceloporus woodi (Florida scrub lizard) protein is L-lactate dehydrogenase B chain (LDHB).